The chain runs to 449 residues: METRGRRPAALQHQQDQPQAHPGQRAARSAPLHRDPDYADEDPAPVERHDPGPSGRAPTTAVQRKPPQPAKRGDMLDRDAVEHVTELWDRLELLGQTLKSMPTADGLKPLKNFASLQELLSLGGERLLAHLVRENMQVRDMLNEVAPLLRDDGSCSSLNYQLQPVIGVIYGPTGCGKSQLLRNLLSSQLISPTPETVFFIAPQVDMIPPSELKAWEMQICEGNYAPGPDGTIIPQSGTLRPRFVKMAYDDLILEHNYDVSDPRNIFAQAAARGPIAIIMDECMENLGGHKGVSKFFHAFPSKLHDKFPKCTGYTVLVVLHNMNPRRDMAGNIANLKIQSKMHLISPRMHPSQLNRFVNTYTKGLPLAISLLLKDIFRHHAQRSCYDWIIYNTTPQHEALQWCYLHPRDGLMPMYLNIQSHLYHVLEKIHRTLNDRDRWSRAYRARKTPK.

Positions 1–77 are disordered; that stretch reads METRGRRPAA…QPAKRGDMLD (77 aa). 171–178 lines the ATP pocket; that stretch reads GPTGCGKS. Residues 440–449 are DNA-binding; the sequence is RAYRARKTPK.

Belongs to the adenoviridae packaging protein 1 family. As to quaternary structure, homodimer. Part of a genome packaging complex composed of packaging proteins 1, 2 and 3; this complex specifically binds to the packaging sequence on the left end of viral genomic DNA and performs packaging of the viral genome. Interacts with protein 33K.

The protein resides in the virion. Its subcellular location is the host nucleus. It localises to the host nucleoplasm. It is found in the host nucleolus. Functionally, component of the packaging machinery which encapsidates the viral DNA into preformed capsids and transcriptional activator of the viral major late promoter (MLP). Binds, along with packaging proteins 2 and 3, to the specific packaging sequence on the left end of viral genomic DNA and displays ATPase activity thereby providing the power stroke of the packaging machinery. The activity of packaging protein IVa2 is stimulated by protein 33K which acts as a terminase. May be the protein that pumps DNA into the capsid powered by ATP hydrolysis. Specifically binds to the 5'-CG-3' nucleotides of the repeats making up the packaging sequence. Component of the DEF-A and DEF-B transcription factors that bind downstream elements of the major late promoter (MLP), and stimulate transcription from the MLP after initiation of viral DNA replication. DEF-A is a heterodimer packaging proteins 1 and 2 and DEF-B is a homodimer of packaging protein 1. This Homo sapiens (Human) protein is Packaging protein 1.